Here is a 342-residue protein sequence, read N- to C-terminus: Nicotinate-nucleotide--dimethylbenzimidazole phosphoribosyltransferase (342 aa).

The Proton acceptor role is filled by Glu-311.

The protein belongs to the CobT family.

It catalyses the reaction 5,6-dimethylbenzimidazole + nicotinate beta-D-ribonucleotide = alpha-ribazole 5'-phosphate + nicotinate + H(+). Its pathway is nucleoside biosynthesis; alpha-ribazole biosynthesis; alpha-ribazole from 5,6-dimethylbenzimidazole: step 1/2. Functionally, catalyzes the synthesis of alpha-ribazole-5'-phosphate from nicotinate mononucleotide (NAMN) and 5,6-dimethylbenzimidazole (DMB). This is Nicotinate-nucleotide--dimethylbenzimidazole phosphoribosyltransferase from Photobacterium profundum (strain SS9).